The chain runs to 91 residues: Cell division protein FtsB (91 aa).

At Met1–Trp3 the chain is on the cytoplasmic side. Residues Pro4 to Leu21 traverse the membrane as a helical segment. At Gly22–His91 the chain is on the periplasmic side. Positions Arg28 to Arg72 form a coiled coil.

It belongs to the FtsB family. As to quaternary structure, part of a complex composed of FtsB, FtsL and FtsQ.

It is found in the cell inner membrane. In terms of biological role, essential cell division protein. May link together the upstream cell division proteins, which are predominantly cytoplasmic, with the downstream cell division proteins, which are predominantly periplasmic. The sequence is that of Cell division protein FtsB from Azoarcus sp. (strain BH72).